A 91-amino-acid polypeptide reads, in one-letter code: Defensin-like protein 220 (91 aa).

The signal sequence occupies residues 1–19 (MKTIFFFITFIVLVSSCTS). 3 cysteine pairs are disulfide-bonded: Cys-61–Cys-78, Cys-64–Cys-83, and Cys-68–Cys-85.

The protein belongs to the DEFL family.

The protein resides in the secreted. This Arabidopsis thaliana (Mouse-ear cress) protein is Defensin-like protein 220.